We begin with the raw amino-acid sequence, 92 residues long: Phospholemman (92 aa).

A signal peptide spans 1 to 20 (MASPGHILIVCVCLLSMASA). Residues 21–35 (EAPQEPDPFTYDYHT) lie on the Extracellular side of the membrane. Residues 36–56 (LRIGGLTIAGILFILGILIIL) form a helical membrane-spanning segment. The Cytoplasmic segment spans residues 57 to 92 (SKRCRCKFNQQQRTGEPDEEEGTFRSSIRRLSTRRR). The S-palmitoyl cysteine moiety is linked to residue Cys60. S-glutathionyl cysteine; alternate is present on Cys62. Cys62 carries the S-palmitoyl cysteine; alternate lipid modification. Residues 66–92 (QQQRTGEPDEEEGTFRSSIRRLSTRRR) are disordered. Position 79 is a phosphothreonine (Thr79). At Ser82 the chain carries Phosphoserine. Position 83 is a phosphoserine; by PKA and PKC (Ser83). A compositionally biased stretch (basic residues) spans 83–92 (SIRRLSTRRR). Ser88 is subject to Phosphoserine; by PKA. Position 89 is a phosphothreonine; by PKC (Thr89).

The protein belongs to the FXYD family. In terms of assembly, homotetramer. Monomer. Regulatory subunit of the sodium/potassium-transporting ATPase (NKA) which is composed of a catalytic alpha subunit, a non-catalytic beta subunit and an additional regulatory subunit. The monomeric form associates with NKA while the oligomeric form does not. Interacts with the catalytic alpha-1 subunit ATP1A1. Also interacts with the catalytic alpha-2 and alpha-3 subunits ATP1A2 and ATP1A3. Very little interaction with ATP1A1, ATP1A2 or ATP1A3 when phosphorylated at Ser-83. Interacts with the non-catalytic beta-1 subunit ATP1B1. Oxidative stress decreases interaction with ATP1A1 but increases interaction with ATP1B1. Major plasma membrane substrate for cAMP-dependent protein kinase (PKA) and protein kinase C (PKC) in several different tissues. Phosphorylated in response to insulin and adrenergic stimulation. Phosphorylation at Ser-88 stimulates sodium/potassium-transporting ATPase activity while the unphosphorylated form inhibits sodium/potassium-transporting ATPase activity. Phosphorylation increases tetramerization, decreases binding to ATP1A1 and reduces inhibition of ATP1A1 activity. Phosphorylation at Ser-83 leads to greatly reduced interaction with ATP1A1, ATP1A2 and ATP1A3. May be phosphorylated by DMPK. In terms of processing, palmitoylation increases half-life and stability and is enhanced upon phosphorylation at Ser-88 by PKA. As to expression, in adult brain, highest levels are found in the cerebellum and in the lateral, third and fourth ventricles of the choroid plexus (at protein level). Also detected in cells of a portion of the ependymal lining of the lateral ventricle on its rostral surface posterior to the caudate putamen (at protein level). Expressed in a subset of neurons which secrete gonadotropin-releasing hormone.

The protein localises to the cell membrane. It is found in the sarcolemma. The protein resides in the apical cell membrane. Its subcellular location is the membrane. It localises to the caveola. The protein localises to the T-tubule. In terms of biological role, associates with and regulates the activity of the sodium/potassium-transporting ATPase (NKA) which transports Na(+) out of the cell and K(+) into the cell. Inhibits NKA activity in its unphosphorylated state and stimulates activity when phosphorylated. Reduces glutathionylation of the NKA beta-1 subunit ATP1B1, thus reversing glutathionylation-mediated inhibition of ATP1B1. Contributes to female sexual development by maintaining the excitability of neurons which secrete gonadotropin-releasing hormone. The protein is Phospholemman of Rattus norvegicus (Rat).